The chain runs to 733 residues: Cyclic nucleotide-gated channel (733 aa).

2 disordered regions span residues 1 to 33 (MSTA…PTAS) and 67 to 95 (PNGN…IEVP). The Cytoplasmic portion of the chain corresponds to 1 to 125 (MSTAEPAPDP…PSTDNFYYWT (125 aa)). Over residues 12-25 (NPSTSGLAPTTNGI) the composition is skewed to polar residues. A helical transmembrane segment spans residues 126–148 (CVVTVAYIYNLLFVIARQVFNDL). The Extracellular segment spans residues 149 to 197 (IGPSSQSLCRFYNGTLNSTTQVECTYNMLTNMKEMPTYSQYPDLGWSKY). A helical transmembrane segment spans residues 198–217 (WHFRMLWVFFDLLMDCVYLI). The Cytoplasmic portion of the chain corresponds to 218–251 (DTFLNYRMGYMDQGLVVREAEKVTKAYWQSKQYR). A helical transmembrane segment spans residues 252–265 (IDGISLIPLDYILG). The Extracellular segment spans residues 266-276 (WPIPYINWRGL). The helical transmembrane segment at 277 to 287 (PILRLNRLIRY) threads the bilayer. Residues 288 to 308 (KRVRNCLERTETRSSMPNAFR) are Cytoplasmic-facing. Residues 309 to 331 (VVVVVWYIVIIIHWNACLYFWIS) form a helical membrane-spanning segment. Residues 332-362 (EWIGLGTDAWVYGHLNKQSLPDDITDTLLRR) lie on the Extracellular side of the membrane. 2 consecutive transmembrane segments (helical) span residues 363–385 (YVYS…SPVR) and 386–411 (NIEY…GNVG). A selectivity filter region spans residues 376–379 (TIGE). Glu-379 contributes to the Na(+) binding site. The Cytoplasmic segment spans residues 412–733 (SMISNMSAAR…TGTESESLLK (322 aa)). Residues 419-496 (AARTEFQNKM…TLRKVRIFQD (78 aa)) form a C-linker region. Residues 493–607 (IFQDCEAGLL…ALREYPDARK (115 aa)) are cyclic nucleotide-binding domain. Gly-559 serves as a coordination point for 3',5'-cyclic GMP. 3',5'-cyclic AMP is bound at residue Glu-560. 3',5'-cyclic GMP is bound by residues Ser-562, Arg-575, Thr-576, Lys-619, and Asp-620. Arg-575 contacts 3',5'-cyclic AMP. The disordered stretch occupies residues 694–733 (SIDGGDISTDGVDERVRPPRLRQTKTIDLPTGTESESLLK).

The protein belongs to the cyclic nucleotide-gated cation channel (TC 1.A.1.5) family. Homotetramer. As to expression, expressed at the sensory endings of thermosensory, gustatory, and olfactory neurons.

It is found in the cell membrane. It localises to the cell projection. The protein resides in the cilium. It carries out the reaction Ca(2+)(in) = Ca(2+)(out). The catalysed reaction is Na(+)(in) = Na(+)(out). The enzyme catalyses K(+)(in) = K(+)(out). Its function is as follows. Pore-forming subunit of the cyclic nucleotide-gated channel. Required for normal thermosensation and chemosensation sensory behavior. Required, downstream of receptor-type guanylate cyclase gcy-9, for CO2-mediated responses in BAG neurons. Required, downstream of receptor-type guanylate cyclase gcy-14, for alkaline pH-mediated responses in ASE-left (ASEL) neurons. Involved in the development of ASJ sensory neuron axon during late larval stages and in the maintenance of normal axon morphology in the adult. Regulates dauer formation. Required for the calcium flux to the cytoplasm in the ASJ sensory neurons upon the onset and removal of a nitric oxide (NO) stimulus, thereby promoting the ASJ-mediated behavioral avoidance response to NO-producing organisms like P.aeruginosa. In ASI and ASJ sensory neurons, controls behavioral response to P.aeruginosa by up-regulating the transcription of daf-7, a member of the TGF-beta family. In AWB and AWC sensory neurons, mediates the recognition of food odors which subsequently allows for the detection of preferred food sources. In AWC neurons, acts to promote expression of srsx-3, a member of the GPCR family. Binding to cGMP results in conformational changes at the hydrophobic gate that converts the protein from an inactive closed state to an active open state. The polypeptide is Cyclic nucleotide-gated channel (tax-4) (Caenorhabditis elegans).